The sequence spans 569 residues: Intraflagellar transport protein 74/72 (569 aa).

Coiled-coil stretches lie at residues 75 to 156, 201 to 231, and 271 to 298; these read ITAT…TRNE, YRSLNDENITLKQKESELRKELQEAAAVAAN, and AITLHRQIRAAKRELDAYKAKIKAAESH.

This sequence belongs to the IFT74 family.

It is found in the cell projection. It localises to the cilium. Its subcellular location is the flagellum. The protein resides in the cytoplasm. The protein localises to the cytoskeleton. It is found in the flagellum axoneme. It localises to the flagellum basal body. Component of the intraflagellar transport complex B (IFT-B) involved in flagellar assembly. In Giardia intestinalis (strain ATCC 50803 / WB clone C6) (Giardia lamblia), this protein is Intraflagellar transport protein 74/72.